The primary structure comprises 451 residues: Tubulin gamma-2 chain (451 aa).

Ser131 carries the phosphoserine; by BRSK1 modification. Position 142 to 148 (142 to 148 (AGGTGSG)) interacts with GTP.

Belongs to the tubulin family. Component of the gamma-tubulin ring complex (gTuRC) consisting of TUBGCP2, TUBGCP3, TUBGCP4, TUBGCP5 and TUBGCP6 and gamma-tubulin TUBG1 or TUBG2. TUBGCP2, TUBGCP3, TUBGCP4, TUBGCP5 and TUBGCP6 assemble in a 5:5:2:1:1 stoichiometry; each is associated with a gamma-tubulin, thereby arranging 14 gamma-tubulins in a helical manner. Gamma-tubulin at the first position is blocked by TUBGCP3 at the last position, allowing 13 protafilaments to grow into a microtubule. Interacts with alpha-beta tubulin heterodimers; the interaction allows microtubules to nucleate from the gTuRC. In terms of processing, phosphorylation at Ser-131 by BRSK1 regulates centrosome duplication, possibly by mediating relocation of gamma-tubulin and its associated proteins from the cytoplasm to the centrosome.

The protein resides in the cytoplasm. Its subcellular location is the cytoskeleton. It is found in the microtubule organizing center. The protein localises to the centrosome. Functionally, tubulin is the major constituent of microtubules, protein filaments consisting of alpha- and beta-tubulin heterodimers. Gamma-tubulin is a key component of the gamma-tubulin ring complex (gTuRC) which mediates microtubule nucleation. The gTuRC regulates the minus-end nucleation of alpha-beta tubulin heterodimers that grow into microtubule protafilaments, a critical step in centrosome duplication and spindle formation. This is Tubulin gamma-2 chain (Tubg2) from Mus musculus (Mouse).